We begin with the raw amino-acid sequence, 335 residues long: Ornithine carbamoyltransferase (335 aa).

Residues 56–59 (STRT), Gln83, Arg107, and 134–137 (HPTQ) contribute to the carbamoyl phosphate site. L-ornithine-binding positions include Asn168, Asp232, and 236 to 237 (SM). Carbamoyl phosphate-binding positions include 274–275 (CL) and Arg320.

This sequence belongs to the aspartate/ornithine carbamoyltransferase superfamily. OTCase family.

It is found in the cytoplasm. The enzyme catalyses carbamoyl phosphate + L-ornithine = L-citrulline + phosphate + H(+). It functions in the pathway amino-acid biosynthesis; L-arginine biosynthesis; L-arginine from L-ornithine and carbamoyl phosphate: step 1/3. Its function is as follows. Reversibly catalyzes the transfer of the carbamoyl group from carbamoyl phosphate (CP) to the N(epsilon) atom of ornithine (ORN) to produce L-citrulline. The sequence is that of Ornithine carbamoyltransferase from Yersinia pestis bv. Antiqua (strain Nepal516).